A 305-amino-acid polypeptide reads, in one-letter code: uncharacterized protein (305 aa).

The next 10 membrane-spanning stretches (helical) occupy residues 11–31 (LLLA…KAAL), 37–57 (LLFA…VALP), 70–90 (IYLV…TIGL), 97–117 (LFSA…WLWL), 126–146 (VIGL…GFGG), 148–168 (ISVI…LGTV), 180–200 (IWMV…SGFW), 217–237 (LLFI…TLVG), 244–264 (VASY…IFLH), and 265–285 (EPLT…ICLV). EamA domains are found at residues 18–141 (IMWG…VISA) and 161–287 (VSWA…LVNT).

This sequence belongs to the EamA transporter family.

It is found in the cell membrane. This is an uncharacterized protein from Bacillus subtilis (strain 168).